The chain runs to 746 residues: Quiannulatene synthase (746 aa).

The segment at 1–336 is sesterterpenoid synthase; sequence MASEVIVISD…SRYPTKTELN (336 aa). Residue D95 coordinates Mg(2+). Residues 338–746 are geranylfarnesyl diphosphate synthase; that stretch reads PEVIIVDGEL…VELMLRRLWV (409 aa). The isopentenyl diphosphate site is built by K465, R468, and H497. Mg(2+) contacts are provided by D504 and D508. A dimethylallyl diphosphate-binding site is contributed by R513. R514 is an isopentenyl diphosphate binding site. Positions 591, 592, 628, 635, and 645 each coordinate dimethylallyl diphosphate.

This sequence in the N-terminal section; belongs to the terpene synthase family. In the C-terminal section; belongs to the FPP/GGPP synthase family. Mg(2+) serves as cofactor.

It carries out the reaction isopentenyl diphosphate + (2E,6E)-farnesyl diphosphate = (2E,6E,10E)-geranylgeranyl diphosphate + diphosphate. The enzyme catalyses (2E,6E,10E,14E)-geranylfarnesyl diphosphate = quiannulatene + diphosphate. It participates in secondary metabolite biosynthesis; terpenoid biosynthesis. Its function is as follows. Bifunctional sesterterpene synthase; part of the gene cluster that mediates the biosynthesis of the pentacyclic sesterterpene quiannulatic acid. The first step of the pathway is performed by the sesterterpene synthase (QS) that possesses both prenyl transferase and terpene cyclase activity, converting isopentenyl diphosphate and dimethylallyl diphosphate into geranylfarnesyl diphosphate (GFPP) and further converting GFPP into quiannulatene via an unprecedented cyclization mode which involves three rounds of hydride shifts and two successive C-C bond migrations to construct the 5-6-5-5-5 fused ring. The cytochrome P450 monooxygenase Qnn-P450 then oxidizes quiannulatene at C-19 in 3 successive reactions to afford quiannulatic acid. In Emericella variicolor (Aspergillus stellatus), this protein is Quiannulatene synthase.